Consider the following 270-residue polypeptide: NFAT activation molecule 1 (270 aa).

A signal peptide spans 1-42; sequence MENQPVRWRALPGLPRPPGLPAAPWLLLGVLLLPGTLRLAGG. At 43–163 the chain is on the extracellular side; it reads QSVTHTGLPI…YREPPQSPQK (121 aa). Residues 50–150 form the Ig-like V-type domain; that stretch reads LPIMASLANT…RGSGTFILVR (101 aa). A disulfide bridge links C65 with C114. The N-linked (GlcNAc...) asparagine glycan is linked to N107. A helical membrane pass occupies residues 164–184; sequence LLLFGFTGLLSVLSVVGTALL. At 185–270 the chain is on the cytoplasmic side; sequence LWNKKRMRGP…GELNLVYENL (86 aa). Residues 190–219 are disordered; the sequence is RMRGPGKDPTRKCPDPRSASSPKQHPSESV. Basic and acidic residues predominate over residues 194 to 204; the sequence is PGKDPTRKCPD. The segment covering 207–219 has biased composition (polar residues); it reads SASSPKQHPSESV. The ITAM domain maps to 209–237; that stretch reads SSPKQHPSESVYTALQRRETEVYACIENE. Residues Y220 and Y231 each carry the phosphotyrosine modification. The interval 234 to 262 is disordered; the sequence is IENEDGSSPTAKQSPLSQERPHRFEDDGE. Residues 239–250 are compositionally biased toward polar residues; the sequence is GSSPTAKQSPLS.

No direct interaction with the B-cell antigen receptor (BCR). Interacts with SYK; probably involved in BCR signaling. Interacts with ZAP70. Post-translationally, N-glycosylated. As to expression, highly expressed in neutrophils, primary monocytes, mast cells, monocytic cell lines and lymphocytes. Also expressed in spleen B and T-cells, and lung. Expressed at low level in non-immune tissue.

The protein resides in the cell membrane. May function in immune system as a receptor which activates via the calcineurin/NFAT-signaling pathway the downstream cytokine gene promoters. Activates the transcription of IL-13 and TNF-alpha promoters. May be involved in the regulation of B-cell, but not T-cell, development. Overexpression activates downstream effectors without ligand binding or antibody cross-linking. The protein is NFAT activation molecule 1 (NFAM1) of Homo sapiens (Human).